Here is a 125-residue protein sequence, read N- to C-terminus: Large ribosomal subunit protein bL12 (125 aa).

This sequence belongs to the bacterial ribosomal protein bL12 family. In terms of assembly, homodimer. Part of the ribosomal stalk of the 50S ribosomal subunit. Forms a multimeric L10(L12)X complex, where L10 forms an elongated spine to which 2 to 4 L12 dimers bind in a sequential fashion. Binds GTP-bound translation factors.

Forms part of the ribosomal stalk which helps the ribosome interact with GTP-bound translation factors. Is thus essential for accurate translation. The chain is Large ribosomal subunit protein bL12 from Campylobacter jejuni (strain RM1221).